The following is a 189-amino-acid chain: Threonylcarbamoyl-AMP synthase (189 aa).

Residues 6–189 (SPAFESVLTA…ALTGELYRQG (184 aa)) form the YrdC-like domain.

This sequence belongs to the SUA5 family. TsaC subfamily.

Its subcellular location is the cytoplasm. It carries out the reaction L-threonine + hydrogencarbonate + ATP = L-threonylcarbamoyladenylate + diphosphate + H2O. Required for the formation of a threonylcarbamoyl group on adenosine at position 37 (t(6)A37) in tRNAs that read codons beginning with adenine. Catalyzes the conversion of L-threonine, HCO(3)(-)/CO(2) and ATP to give threonylcarbamoyl-AMP (TC-AMP) as the acyladenylate intermediate, with the release of diphosphate. This is Threonylcarbamoyl-AMP synthase from Photorhabdus laumondii subsp. laumondii (strain DSM 15139 / CIP 105565 / TT01) (Photorhabdus luminescens subsp. laumondii).